The following is a 343-amino-acid chain: Protein RecA (343 aa).

65–72 (GPESSGKT) serves as a coordination point for ATP.

This sequence belongs to the RecA family.

The protein localises to the cytoplasm. Functionally, can catalyze the hydrolysis of ATP in the presence of single-stranded DNA, the ATP-dependent uptake of single-stranded DNA by duplex DNA, and the ATP-dependent hybridization of homologous single-stranded DNAs. It interacts with LexA causing its activation and leading to its autocatalytic cleavage. The sequence is that of Protein RecA from Campylobacter jejuni subsp. doylei (strain ATCC BAA-1458 / RM4099 / 269.97).